The chain runs to 160 residues: Serine-protein kinase RsbW (160 aa).

This sequence belongs to the anti-sigma-factor family.

It carries out the reaction L-seryl-[protein] + ATP = O-phospho-L-seryl-[protein] + ADP + H(+). The catalysed reaction is L-threonyl-[protein] + ATP = O-phospho-L-threonyl-[protein] + ADP + H(+). In terms of biological role, negative regulator of sigma-B activity. Phosphorylates and inactivates its specific antagonist protein, RsbV. Upon phosphorylation of RsbV, RsbW is released and binds to sigma-B, thereby blocking its ability to form an RNA polymerase holoenzyme (E-sigma-B). The polypeptide is Serine-protein kinase RsbW (Bacillus cereus (strain G9842)).